The chain runs to 156 residues: Ribosomal RNA large subunit methyltransferase H (156 aa).

Residues Leu73, Gly104, and 123–128 (ISSMTL) each bind S-adenosyl-L-methionine.

Belongs to the RNA methyltransferase RlmH family. Homodimer.

It is found in the cytoplasm. It catalyses the reaction pseudouridine(1915) in 23S rRNA + S-adenosyl-L-methionine = N(3)-methylpseudouridine(1915) in 23S rRNA + S-adenosyl-L-homocysteine + H(+). Functionally, specifically methylates the pseudouridine at position 1915 (m3Psi1915) in 23S rRNA. In Burkholderia cenocepacia (strain HI2424), this protein is Ribosomal RNA large subunit methyltransferase H.